The primary structure comprises 362 residues: MLKVGSSLLAADGGGLSPRFALGLAQFVSANLAAGRELVIVSSGAVAAGRAILPKAVDVGAPIAARQALAALGQAQLIALWQRFFERPVAQVLLTHDDLRNRRRYLNARATLGELLRLGALPVINENDTVSVDELKLGDNDNLAAIVAALVDADALFIATDIDGLYSADPRSNPLARPLDDVPELTPEVLAMAGGSGSNVGTGGMRTKLEAAAKAGAAGIETYLFNGRSGEVVRALAQDRLRGTRIHAARTRIAARKYWLRHAPVEAGAILVDAGAAMALSDKGASLLPGGVVGAEGDFRRGDMVEIRLRDDEGERCLARGVSQYSAVDIRRIARRHSREIENVLGYSYGENVVHRDDLVLL.

Lysine 3 contributes to the ATP binding site. Positions 43, 128, and 140 each coordinate substrate. ATP contacts are provided by residues threonine 160–aspartate 161 and threonine 202–lysine 208. The PUA domain occupies alanine 267 to serine 348.

It belongs to the glutamate 5-kinase family.

Its subcellular location is the cytoplasm. The catalysed reaction is L-glutamate + ATP = L-glutamyl 5-phosphate + ADP. The protein operates within amino-acid biosynthesis; L-proline biosynthesis; L-glutamate 5-semialdehyde from L-glutamate: step 1/2. Catalyzes the transfer of a phosphate group to glutamate to form L-glutamate 5-phosphate. The protein is Glutamate 5-kinase of Xanthomonas oryzae pv. oryzae (strain KACC10331 / KXO85).